The following is a 451-amino-acid chain: tRNA-2-methylthio-N(6)-dimethylallyladenosine synthase (451 aa).

Residues 2–119 form the MTTase N-terminal domain; it reads QNLYIKTYGC…LPDLLDACLA (118 aa). The [4Fe-4S] cluster site is built by cysteine 11, cysteine 48, cysteine 82, cysteine 157, cysteine 161, and cysteine 164. The Radical SAM core domain occupies 143-377; the sequence is GRDGATAFVT…RINGLAQGYA (235 aa). The 64-residue stretch at 378-441 folds into the TRAM domain; it reads QALVGTQQAV…PNSLRGRAAL (64 aa).

The protein belongs to the methylthiotransferase family. MiaB subfamily. As to quaternary structure, monomer. [4Fe-4S] cluster serves as cofactor.

It is found in the cytoplasm. It catalyses the reaction N(6)-dimethylallyladenosine(37) in tRNA + (sulfur carrier)-SH + AH2 + 2 S-adenosyl-L-methionine = 2-methylsulfanyl-N(6)-dimethylallyladenosine(37) in tRNA + (sulfur carrier)-H + 5'-deoxyadenosine + L-methionine + A + S-adenosyl-L-homocysteine + 2 H(+). Functionally, catalyzes the methylthiolation of N6-(dimethylallyl)adenosine (i(6)A), leading to the formation of 2-methylthio-N6-(dimethylallyl)adenosine (ms(2)i(6)A) at position 37 in tRNAs that read codons beginning with uridine. The sequence is that of tRNA-2-methylthio-N(6)-dimethylallyladenosine synthase from Acidithiobacillus ferrooxidans (strain ATCC 23270 / DSM 14882 / CIP 104768 / NCIMB 8455) (Ferrobacillus ferrooxidans (strain ATCC 23270)).